The following is an 883-amino-acid chain: Alanine--tRNA ligase (883 aa).

4 residues coordinate Zn(2+): H560, H564, C665, and H669.

This sequence belongs to the class-II aminoacyl-tRNA synthetase family. Zn(2+) serves as cofactor.

It localises to the cytoplasm. The enzyme catalyses tRNA(Ala) + L-alanine + ATP = L-alanyl-tRNA(Ala) + AMP + diphosphate. Functionally, catalyzes the attachment of alanine to tRNA(Ala) in a two-step reaction: alanine is first activated by ATP to form Ala-AMP and then transferred to the acceptor end of tRNA(Ala). Also edits incorrectly charged Ser-tRNA(Ala) and Gly-tRNA(Ala) via its editing domain. This is Alanine--tRNA ligase from Mesomycoplasma hyopneumoniae (strain J / ATCC 25934 / NCTC 10110) (Mycoplasma hyopneumoniae).